The following is a 263-amino-acid chain: MGLMNAFDSQTEDSSPAIGRNLRSRPLARKKLSEMVEEELEQMIRRREFGEGEQLPSERELMAFFNVGRPSVREALAALKRKGLVQINNGERARVSRPSADTIIGEFSGMAKDFLSHPGGIAHFEQLRLFFESSLVRYAAEHATDEQIDLLAKALEINSQSLDNNAAFIRSDVDFHRVLAEIPGNPIFMAIHVALLDWLIAARPTVADQALHEHNNVSYQQHIAIVDAIRRHDPDEADRALQSHLNSVSATWHAFGQTTNKKK.

Residues 1 to 22 (MGLMNAFDSQTEDSSPAIGRNL) form a disordered region. One can recognise an HTH gntR-type domain in the interval 30–98 (KKLSEMVEEE…NGERARVSRP (69 aa)). The segment at residues 58-77 (ERELMAFFNVGRPSVREALA) is a DNA-binding region (H-T-H motif).

It belongs to the NanR family.

Its function is as follows. Transcriptional repressor that controls expression of the genes required for the catabolism of sialic acids. The sequence is that of HTH-type transcriptional repressor NanR from Shigella sonnei (strain Ss046).